Consider the following 515-residue polypeptide: Transcription termination factor Rho (515 aa).

The 76-residue stretch at 146–221 (DVLFTGVLDV…VKIKSINDQD (76 aa)) folds into the Rho RNA-BD domain. ATP is bound by residues 264–269 (GKGQRA), 276–281 (KAGKTT), and Arg-307.

This sequence belongs to the Rho family. In terms of assembly, homohexamer. The homohexamer assembles into an open ring structure.

Its function is as follows. Facilitates transcription termination by a mechanism that involves Rho binding to the nascent RNA, activation of Rho's RNA-dependent ATPase activity, and release of the mRNA from the DNA template. This is Transcription termination factor Rho from Borreliella burgdorferi (strain ATCC 35210 / DSM 4680 / CIP 102532 / B31) (Borrelia burgdorferi).